Consider the following 102-residue polypeptide: Small ribosomal subunit protein bS20 (102 aa).

It belongs to the bacterial ribosomal protein bS20 family.

Its function is as follows. Binds directly to 16S ribosomal RNA. The protein is Small ribosomal subunit protein bS20 of Gloeobacter violaceus (strain ATCC 29082 / PCC 7421).